The chain runs to 269 residues: Shikimate dehydrogenase (NADP(+)) (269 aa).

Shikimate is bound by residues 14–16 (SKS) and T61. Residue K65 is the Proton acceptor of the active site. NADP(+) is bound at residue E77. N86 and D102 together coordinate shikimate. Residues 126–130 (GAGGA), 149–154 (NRTLSK), and M213 each bind NADP(+). Y215 is a shikimate binding site. G238 contacts NADP(+).

Belongs to the shikimate dehydrogenase family. In terms of assembly, homodimer.

The catalysed reaction is shikimate + NADP(+) = 3-dehydroshikimate + NADPH + H(+). It participates in metabolic intermediate biosynthesis; chorismate biosynthesis; chorismate from D-erythrose 4-phosphate and phosphoenolpyruvate: step 4/7. In terms of biological role, involved in the biosynthesis of the chorismate, which leads to the biosynthesis of aromatic amino acids. Catalyzes the reversible NADPH linked reduction of 3-dehydroshikimate (DHSA) to yield shikimate (SA). The protein is Shikimate dehydrogenase (NADP(+)) of Pasteurella multocida (strain Pm70).